A 291-amino-acid chain; its full sequence is MASVTLSEAEKVYIVHGVQEDLRVDGRGCEDYRCVEVETDVVSNTSGSARVKLGHTDILVGVKAEMGTPKLEKPNEGYLEFFVDCSASATPEFEGRGGDDLGTEIANTLYRIFNNKSSVDLKTLCISPREHCWVLYVDVLLLECGGNLFDAISIAVKAALFNTRIPRVRVLEDEEGSKDIELSDDPYDCIRLSVENVPCIVTLCKIGYRHVVDATLQEEACSLASLLVSVTSKGVVTCMRKVGKGSLDPESIFEMMETGKRVGKVLHASLQSVVHKEESLGPKRQKVGFLG.

Ala-2 is subject to N-acetylalanine. Lys-116 is modified (N6-acetyllysine). Residue Ser-177 is modified to Phosphoserine.

The protein belongs to the RNase PH family. Component of the RNA exosome core complex (Exo-9), composed of EXOSC1, EXOSC2, EXOSC3, EXOSC4, EXOSC5, EXOSC6, EXOSC7, EXOSC8 and EXOSC9; within the complex interacts with EXOSC2 and EXOSC4. The catalytically inactive RNA exosome core complex (Exo-9) associates with the catalytic subunit EXOSC10/RRP6. Exo-9 may associate with DIS3 to form the nucleolar exosome complex, or DIS3L to form the cytoplasmic exosome complex. Exo-9 is formed by a hexameric base ring consisting of the heterodimers EXOSC4-EXOSC9, EXOSC5-EXOSC8 and EXOSC6-EXOSC7, and a cap ring consisting of EXOSC1, EXOSC2 and EXOSC3. The RNA exosome complex associates with cofactors C1D/RRP47, MPHOSPH6/MPP6 and MTREX/MTR4. Interacts with ZC3HAV1. Interacts with DIS3; the interaction is direct.

Its subcellular location is the nucleus. It localises to the nucleolus. The protein localises to the cytoplasm. Functionally, non-catalytic component of the RNA exosome complex which has 3'-&gt;5' exoribonuclease activity and participates in a multitude of cellular RNA processing and degradation events. In the nucleus, the RNA exosome complex is involved in proper maturation of stable RNA species such as rRNA, snRNA and snoRNA, in the elimination of RNA processing by-products and non-coding 'pervasive' transcripts, such as antisense RNA species and promoter-upstream transcripts (PROMPTs), and of mRNAs with processing defects, thereby limiting or excluding their export to the cytoplasm. The RNA exosome may be involved in Ig class switch recombination (CSR) and/or Ig variable region somatic hypermutation (SHM) by targeting AICDA deamination activity to transcribed dsDNA substrates. In the cytoplasm, the RNA exosome complex is involved in general mRNA turnover and specifically degrades inherently unstable mRNAs containing AU-rich elements (AREs) within their 3' untranslated regions, and in RNA surveillance pathways, preventing translation of aberrant mRNAs. It seems to be involved in degradation of histone mRNA. The catalytic inactive RNA exosome core complex of 9 subunits (Exo-9) is proposed to play a pivotal role in the binding and presentation of RNA for ribonucleolysis, and to serve as a scaffold for the association with catalytic subunits and accessory proteins or complexes. This chain is Exosome complex component RRP42 (EXOSC7), found in Homo sapiens (Human).